The chain runs to 104 residues: MSEFKNVTIIREANVYFNGGVTSRTIIFDSGCKKTLGVMMPGDYEFNTGSAELMEILSGDLDVLLPGADSWQTIKGGESFDVPANAAFKLKVKSLTDYCCSFLD.

Belongs to the nucleoside phosphorylase PpnP family.

The catalysed reaction is a purine D-ribonucleoside + phosphate = a purine nucleobase + alpha-D-ribose 1-phosphate. The enzyme catalyses adenosine + phosphate = alpha-D-ribose 1-phosphate + adenine. It catalyses the reaction cytidine + phosphate = cytosine + alpha-D-ribose 1-phosphate. It carries out the reaction guanosine + phosphate = alpha-D-ribose 1-phosphate + guanine. The catalysed reaction is inosine + phosphate = alpha-D-ribose 1-phosphate + hypoxanthine. The enzyme catalyses thymidine + phosphate = 2-deoxy-alpha-D-ribose 1-phosphate + thymine. It catalyses the reaction uridine + phosphate = alpha-D-ribose 1-phosphate + uracil. It carries out the reaction xanthosine + phosphate = alpha-D-ribose 1-phosphate + xanthine. In terms of biological role, catalyzes the phosphorolysis of diverse nucleosides, yielding D-ribose 1-phosphate and the respective free bases. Can use uridine, adenosine, guanosine, cytidine, thymidine, inosine and xanthosine as substrates. Also catalyzes the reverse reactions. This is Pyrimidine/purine nucleoside phosphorylase from Geotalea uraniireducens (strain Rf4) (Geobacter uraniireducens).